The primary structure comprises 346 residues: Elongation factor Ts (346 aa).

Residues 80–83 (TDFV) form an involved in Mg(2+) ion dislocation from EF-Tu region.

Belongs to the EF-Ts family.

It is found in the cytoplasm. In terms of biological role, associates with the EF-Tu.GDP complex and induces the exchange of GDP to GTP. It remains bound to the aminoacyl-tRNA.EF-Tu.GTP complex up to the GTP hydrolysis stage on the ribosome. This chain is Elongation factor Ts, found in Streptococcus uberis (strain ATCC BAA-854 / 0140J).